The primary structure comprises 298 residues: GTP cyclohydrolase FolE2 (298 aa).

This sequence belongs to the GTP cyclohydrolase IV family.

The enzyme catalyses GTP + H2O = 7,8-dihydroneopterin 3'-triphosphate + formate + H(+). It participates in cofactor biosynthesis; 7,8-dihydroneopterin triphosphate biosynthesis; 7,8-dihydroneopterin triphosphate from GTP: step 1/1. Functionally, converts GTP to 7,8-dihydroneopterin triphosphate. The protein is GTP cyclohydrolase FolE2 of Xylella fastidiosa (strain 9a5c).